Here is a 681-residue protein sequence, read N- to C-terminus: Cryptochrome-1 (681 aa).

The tract at residues 1 to 489 is CNT1, binds chromophores to sense blue light and mediate CRY dimerization; sequence MSGSVSGCGS…AKARLHEALS (489 aa). One can recognise a Photolyase/cryptochrome alpha/beta domain in the interval 12 to 141; it reads GCSIVWFRRD…AVRSFNADLL (130 aa). A disulfide bridge links C80 with C190. Y235 serves as a coordination point for FAD. Position 238 (N238) interacts with Mg(2+). Residue R239 participates in ATP binding. Positions 241, 244, and 246 each coordinate Mg(2+). FAD-binding positions include 247–251 and S293; that span reads TSFLS. H358 provides a ligand contact to Mg(2+). FAD-binding positions include D359 and 390–392; that span reads DAD. ATP is bound at residue 359–360; it reads DR. ATP is bound at residue D409. Positions 490 to 681 are CCT1/CCE1, mediates blue light signaling; the sequence is QMWQLEAASR…LNWRRLSQTG (192 aa). Disordered stretches follow at residues 525–598 and 616–664; these read RDIT…EPAS and STED…TSSY. The span at 583–598 shows a compositional bias: polar residues; it reads MVNTNQAQQRRAEPAS. Phosphoserine is present on S616. T621 carries the phosphothreonine modification.

This sequence belongs to the DNA photolyase class-1 family. In terms of assembly, homodimer. Interacts with ADO1, COP1 and PHYA. Interacts specifically with the dark/far-red (Pr) state of PHYB, but not with the red light-activated (Pfr). Interacts with PIF4 and PIF5 in the nucleus in response to low blue light (LBL). Binds to SPA1 and SPA4 in response to blue light, this interaction prevents SPA1/COP1 complex formation and thus avoid COP1-dependent degradation of the transcription factor HY5 by the proteasome and promotes hypocotyl elongation. Interacts with TCP2. Binding to ATP mediates conformational changes which facilitate flavin binding. The cofactor is FAD. It depends on (6R)-5,10-methylene-5,6,7,8-tetrahydrofolate as a cofactor. Autophosphorylated; in response to blue light and when in complex with FAD cofactor. Kinase activity is optimal in the presence of magnesium ions, about 30 percent of the optimal activity in the presence of manganese ions, but inactive with calcium ions. Adopts an open conformation when phosphorylated upon photoexcitation and thus interacts with signaling partner proteins. Widely expressed. Expressed in the aerial tissues (e.g. cotyledons and leaf primordia), but not detected in the roots.

The protein localises to the cytoplasm. The protein resides in the nucleus. Its subcellular location is the PML body. Its activity is regulated as follows. Light exposure induces a conformational change in the C-terminal domain CCT1 required for activity. In terms of biological role, photoreceptor that mediates primarily blue light inhibition of hypocotyl elongation and photoperiodic control of floral initiation, and regulates other light responses, including circadian rhythms, tropic growth, stomata opening, guard cell development, root development, bacterial and viral pathogen responses, abiotic stress responses, cell cycles, programmed cell death, apical dominance, fruit and ovule development, seed dormancy, and magnetoreception. Photoexcited cryptochromes interact with signaling partner proteins to alter gene expression at both transcriptional and post-translational levels and, consequently, regulate the corresponding metabolic and developmental programs. Blue-light absorbing flavoprotein that activates reversible flavin photoreduction via an electron transport chain comprising a tryptophan triad (W-324, W-377 and W-400), accompanied by a large conformational change upon photoexcitation, or via an alternative electron transport that involves small metabolites, including NADPH, NADH, and ATP. The half-life of the activated signaling state is about 5 minutes. Also involved in the detection of blue/green ratio in light (shade under leaf canopies) and subsequent adaptations on plant growth and development. In darkness, the dark reoxidation of flavin occurs and leads to inactivated state. Perceives low blue light (LBL) and responds by directly contacting two bHLH transcription factors, PIF4 and PIF5, at chromatin on E-box variant 5'-CA[CT]GTG-3' to promote their activity and stimulate specific gene expression to adapt global physiology (e.g. hypocotyl elongation and hyponastic growth in low blue light). When activated by high-intensity blue light, catalyzes direct enzymatic conversion of molecular oxygen O(2) to reactive oxygen species (ROS) and hydrogen peroxide H(2)O(2) in vitro. ROS accumulation upon activation by blue light leads to cell death in protoplasts. Seems essential for blue-light-triggered and singlet oxygen-mediated programmed cell death (PCD). Required for the induction of nuclear genes encoding photoprotective components by GATA24 and GATA28 in extreme light intensities that exceed the electron utilization capacity of the chloroplast. Involved in shortening the circadian clock period, especially at 27 degrees Celsius, in blue light (BL) and required to maintain clock genes expression rhythm. Mediates blue light-induced gene expression and hypocotyl elongation through the inhibition of COP1-mediated degradation of the transcription factors BIT1 and HY5 and via the activation of anion channels at the plasma membrane, probably via auxin signaling. Required for the hypocotyl hook formation in darkness. Involved in blue light-dependent stomatal opening, CHS gene expression, transpiration, inhibition of stem growth and increase of root growth, probably by regulating abscisic acid (ABA). Prevents lateral roots growth by inhibiting auxin transport. Necessary for shade avoidance syndrome (SAS), characterized by leaf hyponasty and reduced lamina/petiole ratio, when exposed to blue light attenuation. Together with phototropins, involved in phototropism regulation by various blue light fluence; blue light attenuates phototropism in high fluence rates (100 umol.m-2.s-1) but enhances phototropism in low fluence rates (&lt;1.0 umol.m-2.s-1). Required for blue/UV-A wavelengths-mediated inhibition of explants shoot regeneration in vitro (e.g. new shoot apical meristems regeneration from excised cotyledons). Modulates anthocyanin accumulation in a PHYA-dependent manner in far-red-light. Acts as a PHYA/PHYB-dependent modulator of chlorophyll accumulation in red light. Contributes to most blue light deetiolation responses. May act as a chemical magnetoreceptor, via magnetically sensitive kinetics and quantum yields of photo-induced flavin / tryptophan radical pairs. The effect of near-null magnetic field on flowering is altered by changes of blue light cycle and intensity in a CRY1/CRY2-dependent manner. Involved in the strigolactone signaling that regulates hypocotyl growth in response to blue light. Modulates temperature-dependent growth and physiology maintenance, especially at warm ambient temperatures (e.g. 27 degrees Celsius) and in white light and low-light conditions, via HFR1-dependent activity; this process requires PTAC12/HMR/PAP5 (transcriptional transactivator). Its function is as follows. Implicated in promoting R protein-mediated resistance to Pseudomonas syringae pv. tomato (Pst.) DC3000 under continuous light conditions. Promotes systemic acquired resistance (SAR) and PR gene expression triggered by P.syringae. This Arabidopsis thaliana (Mouse-ear cress) protein is Cryptochrome-1.